The following is a 32-amino-acid chain: Chaperone protein DnaK (32 aa).

Belongs to the heat shock protein 70 family.

Functionally, acts as a chaperone. This chain is Chaperone protein DnaK, found in Anabaena sp. (strain L31).